The sequence spans 2057 residues: Fer-1-like protein 5 (2057 aa).

7 consecutive C2 domains span residues methionine 1 to valine 99, proline 152 to arginine 265, aspartate 308 to tyrosine 425, aspartate 1057 to histidine 1188, lysine 1213 to tyrosine 1346, proline 1467 to glycine 1587, and glycine 1705 to serine 1853. 10 residues coordinate Ca(2+): aspartate 1502, aspartate 1508, aspartate 1557, phenylalanine 1558, aspartate 1559, serine 1562, aspartate 1565, aspartate 1824, serine 1827, and aspartate 1830. The chain crosses the membrane as a helical span at residues leucine 1962 to alanine 1982.

It belongs to the ferlin family. Interacts (via second C2 domain) with EHD1 and EHD2. It depends on Ca(2+) as a cofactor.

The protein resides in the cell membrane. Its subcellular location is the membrane. Plays a role in myoblast fusion; probable mediator of endocytic recycling for membrane trafficking events during myotube formation. The polypeptide is Fer-1-like protein 5 (FER1L5) (Homo sapiens (Human)).